We begin with the raw amino-acid sequence, 960 residues long: Ran GTPase-activating protein 2 (960 aa).

LRR repeat units lie at residues 69 to 92, 132 to 156, 162 to 185, 227 to 254, and 313 to 340; these read HLNLEVLDFRGNTLSVLAGKLIAE, GCRLTTLDLSDNAFGAGLSTSLYNF, LYSLENLILNNNGLGLAGKTVGKA, LGTLEEIRLPQNGIRDDGIIALAEAFRM, and RDCLKKVVLSGNNITSDVIDEIGACFNS. Positions 370–408 are disordered; sequence NIDFGRRGDDELLSSDEEEEQGAEDASMEEDAFNTSRET. The span at 380-401 shows a compositional bias: acidic residues; the sequence is ELLSSDEEEEQGAEDASMEEDA. LRR repeat units follow at residues 475–498, 538–561, 568–595, and 663–685; these read ASSMKALELRGNTLGIAAGNVIAK, GCKIKELDLSDNAFGPIGADALKD, SFSLEVLKLNNNGLGIGGKQIAKSLTEC, and NRNLRYLWLEDNTVLPKGAKALA. The disordered stretch occupies residues 777–819; the sequence is PENVNVGDEDDDLGSLDGDQEEYNSKSSDSEDADLDDDDEDDD. 2 stretches are compositionally biased toward acidic residues: residues 783 to 798 and 806 to 819; these read GDEDDDLGSLDGDQEE and SEDADLDDDDEDDD.

Its subcellular location is the nucleus. Its function is as follows. GTPase system comprising ran-1, ran-2 and ran-3 is essential in nucleocytoplasmic trafficking. Ran-2 is a GTPase activator for the nuclear RAS-related regulatory protein Ran, converting it to the putatively inactive GDP-bound state. Required for correct chromosome alignment and segregation on the metaphase plate. The chain is Ran GTPase-activating protein 2 (ran-2) from Caenorhabditis elegans.